The primary structure comprises 89 residues: Large ribosomal subunit protein bL27 (89 aa).

This sequence belongs to the bacterial ribosomal protein bL27 family.

This chain is Large ribosomal subunit protein bL27, found in Cytophaga hutchinsonii (strain ATCC 33406 / DSM 1761 / CIP 103989 / NBRC 15051 / NCIMB 9469 / D465).